Here is a 181-residue protein sequence, read N- to C-terminus: UPF0398 protein lin2003 (181 aa).

It belongs to the UPF0398 family.

In Listeria innocua serovar 6a (strain ATCC BAA-680 / CLIP 11262), this protein is UPF0398 protein lin2003.